A 180-amino-acid polypeptide reads, in one-letter code: Bifunctional protein PyrR (180 aa).

Substrate is bound by residues 39–40, 103–111, and arginine 136; these read TR and DDVLYTGRT. The PRPP-binding signature appears at 99-111; sequence VILIDDVLYTGRT.

The protein belongs to the purine/pyrimidine phosphoribosyltransferase family. PyrR subfamily. As to quaternary structure, homodimer and homohexamer; in equilibrium.

The catalysed reaction is UMP + diphosphate = 5-phospho-alpha-D-ribose 1-diphosphate + uracil. Functionally, regulates transcriptional attenuation of the pyrimidine nucleotide (pyr) operon by binding in a uridine-dependent manner to specific sites on pyr mRNA. This disrupts an antiterminator hairpin in the RNA and favors formation of a downstream transcription terminator, leading to a reduced expression of downstream genes. Also displays a weak uracil phosphoribosyltransferase activity which is not physiologically significant. This is Bifunctional protein PyrR from Halalkalibacterium halodurans (strain ATCC BAA-125 / DSM 18197 / FERM 7344 / JCM 9153 / C-125) (Bacillus halodurans).